The following is a 354-amino-acid chain: Protein RecA (354 aa).

68 to 75 contacts ATP; sequence GPESSGKT.

Belongs to the RecA family.

Its subcellular location is the cytoplasm. Functionally, can catalyze the hydrolysis of ATP in the presence of single-stranded DNA, the ATP-dependent uptake of single-stranded DNA by duplex DNA, and the ATP-dependent hybridization of homologous single-stranded DNAs. It interacts with LexA causing its activation and leading to its autocatalytic cleavage. The protein is Protein RecA of Synechocystis sp. (strain ATCC 27184 / PCC 6803 / Kazusa).